The following is a 502-amino-acid chain: Lysine--tRNA ligase (502 aa).

2 residues coordinate Mg(2+): glutamate 410 and glutamate 417.

Belongs to the class-II aminoacyl-tRNA synthetase family. Homodimer. The cofactor is Mg(2+).

It localises to the cytoplasm. The enzyme catalyses tRNA(Lys) + L-lysine + ATP = L-lysyl-tRNA(Lys) + AMP + diphosphate. In Photobacterium profundum (strain SS9), this protein is Lysine--tRNA ligase.